Reading from the N-terminus, the 25-residue chain is Ocellatin-P1 (25 aa).

The residue at position 25 (leucine 25) is a Leucine amide.

As to expression, expressed by the skin glands.

The protein localises to the secreted. In terms of biological role, antibacterial peptide that inhibits reference strains of both Gram-negative bacteria (E.coli, E.cloacae, K.pneumoniae, P.aeruginosa) and Gram-positive bacteria (S.aureus, S.epidermidis, E.faecalis, Streptococcus group B) with relatively low potencies (MIC=25-200 uM). The peptide shows very low hemolytic activity against human erythrocytes. Wheel projection demonstrates the amphipathicity of the alpha-helices is low which may explain the low antibacterial potency. This chain is Ocellatin-P1, found in Leptodactylus pentadactylus (Smokey jungle frog).